The chain runs to 78 residues: MSRRKREEPWRYEAAIAEVETLIAQIESGELDLAEVVERFQQAAQTLKTCADFLEQKRQQVEIIIEQLGQEEEDLPES.

This sequence belongs to the XseB family. In terms of assembly, heterooligomer composed of large and small subunits.

It is found in the cytoplasm. It catalyses the reaction Exonucleolytic cleavage in either 5'- to 3'- or 3'- to 5'-direction to yield nucleoside 5'-phosphates.. In terms of biological role, bidirectionally degrades single-stranded DNA into large acid-insoluble oligonucleotides, which are then degraded further into small acid-soluble oligonucleotides. This chain is Exodeoxyribonuclease 7 small subunit, found in Synechococcus sp. (strain JA-2-3B'a(2-13)) (Cyanobacteria bacterium Yellowstone B-Prime).